The primary structure comprises 1463 residues: Clustered mitochondria protein homolog (1463 aa).

Residues 1-79 (MAKNKKQNGK…ETEQQQQQQE (79 aa)) form a disordered region. Low complexity predominate over residues 10 to 22 (KAKTPPVVAAAAG). Residues 374 to 616 (RAEDTFSSKL…RTFPPDVNFL (243 aa)) form the Clu domain. Disordered regions lie at residues 684–753 (AQKT…SEDA), 942–988 (GDGQ…SVPS), and 1387–1463 (QKEA…RRKS). Low complexity predominate over residues 692 to 702 (KQAAIEAAAPA). Residues 703–731 (EGDKTPAKDAKDGKEAGKDANDGKEEGST) show a composition bias toward basic and acidic residues. The span at 955-964 (GGKKQNKQSK) shows a compositional bias: basic residues. Over residues 965–980 (RGGGGGGGKGAAGGGR) the composition is skewed to gly residues. Over residues 1438-1456 (AEAASHTAGGAAANTAAPA) the composition is skewed to low complexity.

This sequence belongs to the CLU family.

The protein localises to the cytoplasm. MRNA-binding protein involved in proper cytoplasmic distribution of mitochondria. The protein is Clustered mitochondria protein homolog of Anopheles gambiae (African malaria mosquito).